The primary structure comprises 1102 residues: Ubiquitin carboxyl-terminal hydrolase 7 (1102 aa).

Positions methionine 1–glutamine 10 are enriched in low complexity. Residues methionine 1–glutamine 38 are disordered. Residues methionine 1–lysine 208 form an interaction with TSPYL5 region. Serine 18 carries the phosphoserine modification. A compositionally biased stretch (acidic residues) spans glutamate 19–aspartate 31. Serine 49 is subject to Phosphoserine. The interaction with p53/TP53, MDM2 and EBNA1 stretch occupies residues asparagine 53–lysine 208. Residues glutamate 68–valine 195 enclose the MATH domain. Positions threonine 70–tryptophan 205 are necessary for nuclear localization. The 308-residue stretch at valine 214–glutamate 521 folds into the USP domain. The active-site Nucleophile is cysteine 223. The Proton acceptor role is filled by histidine 464. Residues leucine 622 to lysine 801 are interaction with ICP0/VMW110. Lysine 869 carries the post-translational modification N6-acetyllysine; alternate. Lysine 869 participates in a covalent cross-link: Glycyl lysine isopeptide (Lys-Gly) (interchain with G-Cter in SUMO2); alternate. Lysine 869 is covalently cross-linked (Glycyl lysine isopeptide (Lys-Gly) (interchain with G-Cter in ubiquitin); alternate). Residue lysine 882 forms a Glycyl lysine isopeptide (Lys-Gly) (interchain with G-Cter in SUMO2) linkage. At serine 963 the chain carries Phosphoserine. An N6-acetyllysine mark is found at lysine 1084 and lysine 1096.

This sequence belongs to the peptidase C19 family. Monomer. Homodimer. Part of a complex with DAXX, MDM2, RASSF1 and USP7. Part of a complex with DAXX, MDM2 and USP7. Interacts with MDM2; the interaction is independent of p53/TP53. Interacts with DAXX; the interaction is direct and independent of MDM2 and p53/TP53. Component of a complex composed of KMT2E/MLL5 (isoform 3), OGT (isoform 1) and USP7; the complex stabilizes KMT2E/MLL5, preventing KMT2E/MLL5 ubiquitination and proteasomal-mediated degradation. Interacts (via MATH domain) with KMT2E/MLL5 isoform 3. Interacts with OGT isoform 1. Interacts with FOXO4; the interaction is enhanced in presence of hydrogen peroxide and occurs independently of p53/TP53. Interacts with p53/TP53; the interaction is enhanced in response to DNA damage. Interacts with TSPYL5; this impairs interaction with p53/TP53. Interacts with PTEN; the interaction is direct. Interacts with ATXN1 and the strength of interaction is influenced by the length of the poly-Gln region in ATXN1. A weaker interaction seen with mutants having longer poly-Gln regions. Interacts with KIAA1530/UVSSA. Interacts with ABRAXAS2; the interaction is direct. Identified in a complex with TP53/p53 and ABRAXAS2. Interacts with MEX3C and antagonizes its ability to degrade mRNA. Interacts with DNMT1 and UHRF1. Interacts with FOXP3. Interacts (via MATH domain) with RNF220. Associated component of the Polycomb group (PcG) multiprotein PRC1-like complex. Interacts with EPOP. Interacts with OTUD4 and USP9X; the interaction is direct. Interacts with CRY2. Interacts with REST. Interacts with ERCC6. Part of a complex consisting of USP7, MAGEL2 and TRIM27; directly interacts with MAGEL2; directly interacts with TRIM27. In terms of assembly, (Microbial infection) Isoform 1 and isoform 2 interact with herpesvirus 1 trans-acting transcriptional protein ICP0/VMW110. Binding to ICP0/VMW110 may modulate the substrate specificity or activity of USP7 to stabilize viral proteins. As to quaternary structure, (Microbial infection) Interacts with Epstein-Barr virus EBNA1; the interaction is independent and simultaneous to EBNA1 interaction with USP7 as well as necessary for PML nuclear bodies disruption by EBNA1. EBNA1, USP7 and CSNK2B form a ternary complex. EBNA1 shows a 10-fold higher affinity than p53/TP53 and can compete with it for USP7 binding. (Microbial infection) Interacts with human cytomegalovirus proteins UL35 and UL35A; these interactions inhibit the ability of USP7 to form nuclear bodies. In terms of assembly, (Microbial infection) Interacts with herpes virus 8/HHV-8 proteins vIRF-1 and vIRF-3; these interactions may disrupt TP53 signaling pathway during viral infection by decreasing the availability of USP7 for deubiquitinating and stabilizing TP53. As to quaternary structure, (Microbial infection) Interacts with herpes virus 8/HHV-8 protein vIRF-2; this interaction modulates antiviral signaling via disruption of USP7 interactions with innate immune signaling proteins TRAF3 and TRAF6 thus affecting their ubiquitination. Post-translationally, isoform 1: Phosphorylated. Isoform 1 is phosphorylated at positions Ser-18 and Ser-963. Isoform 2: Not phosphorylated. Isoform 1: Polyneddylated. Isoform 2: Not Polyneddylated. In terms of processing, isoform 1 and isoform 2: Not sumoylated. Post-translationally, isoform 1 and isoform 2: Polyubiquitinated by herpesvirus 1 trans-acting transcriptional protein ICP0/VMW110; leading to its subsequent proteasomal degradation. Isoform 1: Ubiquitinated at Lys-869. Expressed in neural progenitor cells (at protein level). Widely expressed. Overexpressed in prostate cancer.

It localises to the nucleus. The protein resides in the cytoplasm. The protein localises to the PML body. It is found in the chromosome. It carries out the reaction Thiol-dependent hydrolysis of ester, thioester, amide, peptide and isopeptide bonds formed by the C-terminal Gly of ubiquitin (a 76-residue protein attached to proteins as an intracellular targeting signal).. Its activity is regulated as follows. Inhibited by N-ethyl-maleimide (NEM) and divalent cations. Tolerates high concentrations of NaCl but is inhibited at concentrations of 195 mM and higher. Its function is as follows. Hydrolase that deubiquitinates target proteins such as ARMC5, FOXO4, DEPTOR, KAT5, p53/TP53, MDM2, ERCC6, DNMT1, UHRF1, PTEN, KMT2E/MLL5 and DAXX. Together with DAXX, prevents MDM2 self-ubiquitination and enhances the E3 ligase activity of MDM2 towards p53/TP53, thereby promoting p53/TP53 ubiquitination and proteasomal degradation. Deubiquitinates p53/TP53, preventing degradation of p53/TP53, and enhances p53/TP53-dependent transcription regulation, cell growth repression and apoptosis. Deubiquitinates p53/TP53 and MDM2 and strongly stabilizes p53/TP53 even in the presence of excess MDM2, and also induces p53/TP53-dependent cell growth repression and apoptosis. Deubiquitination of FOXO4 in presence of hydrogen peroxide is not dependent on p53/TP53 and inhibits FOXO4-induced transcriptional activity. In association with DAXX, is involved in the deubiquitination and translocation of PTEN from the nucleus to the cytoplasm, both processes that are counteracted by PML. Deubiquitinates KMT2E/MLL5 preventing KMT2E/MLL5 proteasomal-mediated degradation. Involved in cell proliferation during early embryonic development. Involved in transcription-coupled nucleotide excision repair (TC-NER) in response to UV damage: recruited to DNA damage sites following interaction with KIAA1530/UVSSA and promotes deubiquitination of ERCC6, preventing UV-induced degradation of ERCC6. Involved in maintenance of DNA methylation via its interaction with UHRF1 and DNMT1: acts by mediating deubiquitination of UHRF1 and DNMT1, preventing their degradation and promoting DNA methylation by DNMT1. Deubiquitinates alkylation repair enzyme ALKBH3. OTUD4 recruits USP7 and USP9X to stabilize ALKBH3, thereby promoting the repair of alkylated DNA lesions. Acts as a chromatin regulator via its association with the Polycomb group (PcG) multiprotein PRC1-like complex; may act by deubiquitinating components of the PRC1-like complex. Able to mediate deubiquitination of histone H2B; it is however unsure whether this activity takes place in vivo. Exhibits a preference towards 'Lys-48'-linked ubiquitin chains. Increases regulatory T-cells (Treg) suppressive capacity by deubiquitinating and stabilizing the transcription factor FOXP3 which is crucial for Treg cell function. Plays a role in the maintenance of the circadian clock periodicity via deubiquitination and stabilization of the CRY1 and CRY2 proteins. Deubiquitinates REST, thereby stabilizing REST and promoting the maintenance of neural progenitor cells. Deubiquitinates SIRT7, inhibiting SIRT7 histone deacetylase activity and regulating gluconeogenesis. Involved in the regulation of WASH-dependent actin polymerization at the surface of endosomes and the regulation of endosomal protein recycling. It maintains optimal WASH complex activity and precise F-actin levels via deubiquitination of TRIM27 and WASHC1. Mediates the deubiquitination of phosphorylated DEPTOR, promoting its stability and leading to decreased mTORC1 signaling. In terms of biological role, (Microbial infection) Contributes to the overall stabilization and trans-activation capability of the herpesvirus 1 trans-acting transcriptional protein ICP0/VMW110 during HSV-1 infection. (Microbial infection) Upon infection with Epstein-Barr virus, the interaction with viral EBNA1 increases the association of USP7 with PML proteins, which is required for the polyubiquitylation and degradation of PML. This chain is Ubiquitin carboxyl-terminal hydrolase 7, found in Homo sapiens (Human).